We begin with the raw amino-acid sequence, 352 residues long: 4-hydroxy-3-methylbut-2-en-1-yl diphosphate synthase (flavodoxin) (352 aa).

Residues Cys-265, Cys-268, Cys-300, and Glu-307 each contribute to the [4Fe-4S] cluster site.

It belongs to the IspG family. It depends on [4Fe-4S] cluster as a cofactor.

The enzyme catalyses (2E)-4-hydroxy-3-methylbut-2-enyl diphosphate + oxidized [flavodoxin] + H2O + 2 H(+) = 2-C-methyl-D-erythritol 2,4-cyclic diphosphate + reduced [flavodoxin]. It participates in isoprenoid biosynthesis; isopentenyl diphosphate biosynthesis via DXP pathway; isopentenyl diphosphate from 1-deoxy-D-xylulose 5-phosphate: step 5/6. Converts 2C-methyl-D-erythritol 2,4-cyclodiphosphate (ME-2,4cPP) into 1-hydroxy-2-methyl-2-(E)-butenyl 4-diphosphate. The polypeptide is 4-hydroxy-3-methylbut-2-en-1-yl diphosphate synthase (flavodoxin) (Persephonella marina (strain DSM 14350 / EX-H1)).